The chain runs to 938 residues: TFIIH basal transcription factor complex helicase/translocase XPB subunit (938 aa).

The Helicase ATP-binding domain occupies 394–562 (FRSGNKAHQG…DLRHLVGPKL (169 aa)). Residue 407–414 (LPCGAGKT) participates in ATP binding. The DEVH box signature appears at 515 to 518 (DEVH). Residues 627 to 781 (WCTQALLEFH…SYRVLQSDMV (155 aa)) form the Helicase C-terminal domain.

Belongs to the helicase family. RAD25/XPB subfamily. Component of the 7-subunit TFIIH core complex composed of XPB, XPD, SSL1, TFB1, TFB2, TFB4 and TFB5.

It catalyses the reaction Couples ATP hydrolysis with the unwinding of duplex DNA by translocating in the 3'-5' direction.. It carries out the reaction ATP + H2O = ADP + phosphate + H(+). Its function is as follows. ATP-dependent 3'-5' DNA helicase/translocase; binds dsDNA rather than ssDNA, unzipping it in a translocase rather than classical helicase activity. Component of the general transcription factor IIH (TFIIH) core complex, involved in spliced leader RNA (SL RNA) gene transcription by RNA polymerase II. TFIIH has an essential role in transcription initiation. When the pre-initiation complex (PIC) has been established, TFIIH is required for promoter opening and promoter escape. The ATPase activity of XPB is required for promoter opening and promoter escape. In Trypanosoma brucei brucei (strain 927/4 GUTat10.1), this protein is TFIIH basal transcription factor complex helicase/translocase XPB subunit.